Here is a 464-residue protein sequence, read N- to C-terminus: Argininosuccinate lyase (464 aa).

The protein belongs to the lyase 1 family. Argininosuccinate lyase subfamily.

Its subcellular location is the cytoplasm. The catalysed reaction is 2-(N(omega)-L-arginino)succinate = fumarate + L-arginine. Its pathway is amino-acid biosynthesis; L-arginine biosynthesis; L-arginine from L-ornithine and carbamoyl phosphate: step 3/3. The sequence is that of Argininosuccinate lyase from Pseudomonas aeruginosa (strain UCBPP-PA14).